Reading from the N-terminus, the 735-residue chain is Wall-associated receptor kinase 1 (735 aa).

The N-terminal stretch at 1–24 (MKVQEGLFLVAIFFSLACTQLVKG) is a signal peptide. At 25–331 (QHQPGENCQN…TTTMSCKRKE (307 aa)) the chain is on the extracellular side. N-linked (GlcNAc...) asparagine glycosylation is found at Asn38, Asn56, Asn80, Asn90, Asn113, Asn140, Asn209, Asn235, and Asn250. The segment at 67-254 (RPHVLSDIEV…SICGGNSTCL (188 aa)) is polygalacturonic acid-binding. The region spanning 234 to 281 (GNQTCEQVGSTSICGGNSTCLDSTPRNGYICRCNEGFDGNPYLSAGCQ) is the EGF-like 1 domain. 6 cysteine pairs are disulfide-bonded: Cys238/Cys253, Cys247/Cys264, Cys266/Cys280, Cys286/Cys303, Cys297/Cys312, and Cys314/Cys327. The EGF-like 2; calcium-binding domain occupies 282–328 (DVNECTTSSTIHRHNCSDPKTCRNKVGGFYCKCQSGYRLDTTTMSCK). A glycan (N-linked (GlcNAc...) asparagine) is linked at Asn296. The helical transmembrane segment at 332 to 352 (FAWTTILLVTTIGFLVILLGV) threads the bilayer. Topologically, residues 353 to 735 (ACIQQRMKHL…VAILDIETGR (383 aa)) are cytoplasmic. A Phosphothreonine modification is found at Thr398. Residues 409–692 (YAESRILGQG…RVEKTKHKWS (284 aa)) form the Protein kinase domain. ATP contacts are provided by residues 415–423 (LGQGGQGTV) and Lys437. Residue Tyr482 is modified to Phosphotyrosine. Asp534 acts as the Proton acceptor in catalysis. Residues Thr568 and Thr573 each carry the phosphothreonine modification. A Phosphotyrosine modification is found at Tyr581.

The protein belongs to the protein kinase superfamily. Ser/Thr protein kinase family. As to quaternary structure, interacts with the glycine-rich proteins GRP3 and GRP3S, and the type 2C protein phosphatase KAPP. Component of a 500 kDa complex, composed of WAK1, GRP3 and KAPP. Interacts with the oxygen-evolving enhancer protein 2 (OEE2). In terms of tissue distribution, predominantly expressed in green tissues such as stems and leaves. Detected at organ junctions.

The protein localises to the membrane. It catalyses the reaction L-seryl-[protein] + ATP = O-phospho-L-seryl-[protein] + ADP + H(+). The enzyme catalyses L-threonyl-[protein] + ATP = O-phospho-L-threonyl-[protein] + ADP + H(+). Serine/threonine-protein kinase that may function as a signaling receptor of extracellular matrix component. Binding to pectin may have significance in the control of cell expansion, morphogenesis and development. Required during plant's response to pathogen infection and in plant defense against heavy metal toxicity. Phosphorylates the oxygen-evolving enhancer protein 2 (OEE2) in an GRP-3-dependent manner. This chain is Wall-associated receptor kinase 1 (WAK1), found in Arabidopsis thaliana (Mouse-ear cress).